The primary structure comprises 158 residues: NADH-quinone oxidoreductase subunit B (158 aa).

Residues C37, C38, C102, and C132 each contribute to the [4Fe-4S] cluster site.

It belongs to the complex I 20 kDa subunit family. NDH-1 is composed of 14 different subunits. Subunits NuoB, C, D, E, F, and G constitute the peripheral sector of the complex. Requires [4Fe-4S] cluster as cofactor.

The protein localises to the cell inner membrane. The catalysed reaction is a quinone + NADH + 5 H(+)(in) = a quinol + NAD(+) + 4 H(+)(out). Functionally, NDH-1 shuttles electrons from NADH, via FMN and iron-sulfur (Fe-S) centers, to quinones in the respiratory chain. Couples the redox reaction to proton translocation (for every two electrons transferred, four hydrogen ions are translocated across the cytoplasmic membrane), and thus conserves the redox energy in a proton gradient. The sequence is that of NADH-quinone oxidoreductase subunit B from Leptothrix cholodnii (strain ATCC 51168 / LMG 8142 / SP-6) (Leptothrix discophora (strain SP-6)).